A 952-amino-acid chain; its full sequence is ALS2 C-terminal-like protein (952 aa).

MORN repeat units follow at residues 358–380, 381–403, 409–431, 432–454, 459–481, 483–505, 506–528, and 529–552; these read YDGEWCRAKPHGKGTLKWPDGRN, HVGTFYQGLEHGFGICLVPQASE, YKCHWREGRMCEYGICEYGTDEV, YKGYFQAGLRHGFGILESAPQAP, YTGHWERGQRSGYGIEEDRDRGE, YIGMWQADQRHGPGVVVTQAGVC, YQGTFQGDKMAGPGILLCEDDSL, and YEGTFTRDLTLLGKGKVTFPNGFT. One can recognise a VPS9 domain in the interval 795 to 941; sequence LFPDTKLLEF…IQKEDMRPHH (147 aa).

As to quaternary structure, homodimer. Forms a heteromeric complex with ALS2. Interacts with ALS2 and RAB5A. As to expression, expressed in heart, lung, liver and kidney.

The protein resides in the cytoplasm. Acts as a guanine nucleotide exchange factor (GEF) for Rab5 GTPase. Regulates the ALS2-mediated endosome dynamics. The polypeptide is ALS2 C-terminal-like protein (Als2cl) (Mus musculus (Mouse)).